Consider the following 445-residue polypeptide: MHSQIWVVSTLLISIVLIVLTIVKFKFHPFLALLLASFFVGTMMGMGPLDMVNAIESGIGGTLGFLAAVIGLGTILGKMMEVSGAAERIGLTLQRCRWLSADVIMVLVGLICGITLFVEVGVVLLIPLAFSIAKKTNTSLLKLAIPLCTALMAVHCVVPPHPAALYVANKLGADIGSVIVYGLLVGLMASLIGGPLFLKFLGQRLPFKPVPTEFADLKVRDEKTLPSLGATLFTVLLPIALMLVKTIAELNMARESGLYTLLEFIGNPITATFIAVFVAYYVLGIRQHMSMGTMLTHTENGFGSIANILLIIGAGGAFNAILKSSSLADTLAVILSNMHMHPILLAWLVALILHAAVGSATVAMMGATAIVAPMLPLYPDISPEIIAIAIGSGAIGCTIVTDSLFWLVKQYCGATLNETFKYYTTATFIASVIALAGTFLLSFII.

Helical transmembrane passes span 5-25 (IWVV…IVKF), 29-49 (PFLA…MGPL), 57-77 (SGIG…TILG), 106-126 (VLVG…VLLI), 140-160 (LLKL…VVPP), 178-198 (VIVY…PLFL), 224-244 (TLPS…LMLV), 265-285 (IGNP…VLGI), 302-322 (FGSI…NAIL), 343-363 (ILLA…ATVA), 385-405 (IIAI…DSLF), and 425-445 (TATF…SFII).

The protein belongs to the GntP permease family.

The protein localises to the cell inner membrane. Uptake of D-serine is inhibited by carbonyl cyanide m-chlorophenylhydrazone (CCCP), and at high concentrations of D-threonine, stimulated by D-cycloserine and not affected by D-alanine or glycine. In terms of biological role, protein that allows transport of D-serine across the inner membrane, does not transport D-alanine nor probably glycine. Is probably a H(+) symporter, as CCCP inhibits transport. Transports D-serine more efficiently than CycA. The protein is D-serine transporter DsdX (dsdX) of Escherichia coli O6:H1 (strain CFT073 / ATCC 700928 / UPEC).